The sequence spans 79 residues: UPF0180 protein BCE_1513 (79 aa).

This sequence belongs to the UPF0180 family.

This chain is UPF0180 protein BCE_1513, found in Bacillus cereus (strain ATCC 10987 / NRS 248).